We begin with the raw amino-acid sequence, 335 residues long: Cathepsin B (335 aa).

A signal peptide spans methionine 1–serine 19. The propeptide at serine 20–valine 79 is activation peptide. 6 disulfide bridges follow: cysteine 93–cysteine 122, cysteine 105–cysteine 150, cysteine 141–cysteine 207, cysteine 142–cysteine 146, cysteine 179–cysteine 211, and cysteine 187–cysteine 198. Cysteine 108 is a catalytic residue. Asparagine 192 carries an N-linked (GlcNAc...) asparagine glycan. Lysine 220 carries the N6-acetyllysine modification. Catalysis depends on residues histidine 278 and asparagine 298. A propeptide spanning residues histidine 333–histidine 335 is cleaved from the precursor.

It belongs to the peptidase C1 family. In terms of assembly, dimer of a heavy chain and a light chain cross-linked by a disulfide bond. Interacts with SRPX2. Directly interacts with SHKBP1.

It is found in the lysosome. It localises to the melanosome. Its subcellular location is the secreted. The protein resides in the extracellular space. The protein localises to the apical cell membrane. It catalyses the reaction Hydrolysis of proteins with broad specificity for peptide bonds. Preferentially cleaves -Arg-Arg-|-Xaa bonds in small molecule substrates (thus differing from cathepsin L). In addition to being an endopeptidase, shows peptidyl-dipeptidase activity, liberating C-terminal dipeptides.. In terms of biological role, thiol protease which is believed to participate in intracellular degradation and turnover of proteins. Cleaves matrix extracellular phosphoglycoprotein MEPE. Involved in the solubilization of cross-linked TG/thyroglobulin in the thyroid follicle lumen. Has also been implicated in tumor invasion and metastasis. The polypeptide is Cathepsin B (CTSB) (Ovis aries (Sheep)).